We begin with the raw amino-acid sequence, 202 residues long: LexA repressor (202 aa).

The segment at residues 28–48 is a DNA-binding region (H-T-H motif); it reads RAEIAMRLGFRSPNAAEEHLK. Active-site for autocatalytic cleavage activity residues include Ser119 and Lys156.

Belongs to the peptidase S24 family. Homodimer.

It carries out the reaction Hydrolysis of Ala-|-Gly bond in repressor LexA.. Functionally, represses a number of genes involved in the response to DNA damage (SOS response), including recA and lexA. Binds to the 16 bp palindromic sequence 5'-CTGTATATATATACAG-3'. In the presence of single-stranded DNA, RecA interacts with LexA causing an autocatalytic cleavage which disrupts the DNA-binding part of LexA, leading to derepression of the SOS regulon and eventually DNA repair. The sequence is that of LexA repressor from Serratia proteamaculans (strain 568).